The chain runs to 436 residues: GTPase Der (436 aa).

EngA-type G domains are found at residues 4–167 (PTIA…PNTS) and 175–351 (IKFS…MNQN). GTP contacts are provided by residues 10-17 (GRPNVGKS), 57-61 (DTGGI), 119-122 (NKVD), 181-188 (GRPNVGKS), 229-233 (DTAGM), and 294-297 (NKWD). One can recognise a KH-like domain in the interval 352-436 (LRIPSALLND…PIKIIPRRRK (85 aa)).

This sequence belongs to the TRAFAC class TrmE-Era-EngA-EngB-Septin-like GTPase superfamily. EngA (Der) GTPase family. In terms of assembly, associates with the 50S ribosomal subunit.

GTPase that plays an essential role in the late steps of ribosome biogenesis. The chain is GTPase Der from Enterococcus faecalis (strain ATCC 700802 / V583).